Consider the following 160-residue polypeptide: uncharacterized protein (160 aa).

One can recognise an N-acetyltransferase domain in the interval 5–160 (ISLSFYKPEH…GEQLILHHFL (156 aa)).

This is an uncharacterized protein from Bacillus subtilis (strain 168).